We begin with the raw amino-acid sequence, 416 residues long: Peptide chain release factor subunit 1 (416 aa).

This sequence belongs to the eukaryotic release factor 1 family. In terms of assembly, heterodimer of two subunits, one of which binds GTP.

The protein resides in the cytoplasm. Its function is as follows. Directs the termination of nascent peptide synthesis (translation) in response to the termination codons UAA, UAG and UGA. The protein is Peptide chain release factor subunit 1 of Halorubrum lacusprofundi (strain ATCC 49239 / DSM 5036 / JCM 8891 / ACAM 34).